Reading from the N-terminus, the 504-residue chain is Glutamate--tRNA ligase (504 aa).

The 'HIGH' region motif lies at 27–37; the sequence is PSPTGTPHVGL. Residues 271 to 275 carry the 'KMSKS' region motif; sequence KLSKR. ATP is bound at residue K274.

Belongs to the class-I aminoacyl-tRNA synthetase family. Glutamate--tRNA ligase type 1 subfamily. In terms of assembly, monomer.

It is found in the cytoplasm. The enzyme catalyses tRNA(Glu) + L-glutamate + ATP = L-glutamyl-tRNA(Glu) + AMP + diphosphate. Catalyzes the attachment of glutamate to tRNA(Glu) in a two-step reaction: glutamate is first activated by ATP to form Glu-AMP and then transferred to the acceptor end of tRNA(Glu). The chain is Glutamate--tRNA ligase from Arthrobacter sp. (strain FB24).